A 142-amino-acid polypeptide reads, in one-letter code: Glia maturation factor gamma (142 aa).

An N-acetylserine modification is found at serine 2. Residues serine 4–alanine 139 form the ADF-H domain.

This sequence belongs to the actin-binding proteins ADF family. GMF subfamily. In terms of tissue distribution, expressed in rat thymus, testis, and spleen. Is present predominantly in proliferative and differentiative organs.

This is Glia maturation factor gamma (Gmfg) from Rattus norvegicus (Rat).